A 490-amino-acid chain; its full sequence is CUGBP Elav-like family member 1 (490 aa).

2 RRM domains span residues 16–99 (IKMF…PADS) and 108–188 (RKLF…FADT). Residues 283-312 (PSAGSALTTSSSPLSILTSSGSSPSSNNNS) are disordered. Positions 405 to 483 (ANLFIYHLPQ…KRLKVQLKRS (79 aa)) constitute an RRM 3 domain.

This sequence belongs to the CELF/BRUNOL family. Oligomer. Oligomerization is required for RNA-binding and EDEN-dependent deadenylation. Phosphorylated during oocyte maturation and dephosphorylated following egg activation. Dephosphorylation is calcium dependent and correlates with the increase in the activity of EDEN-dependent deadenylation.

It localises to the nucleus. Its subcellular location is the cytoplasm. In terms of biological role, RNA-binding protein implicated in the regulation of several post-transcriptional events. May be involved in pre-mRNA alternative splicing, mRNA translation activation and stability. Mediates the rapid and sequence-specific cytoplasmic deadenylation of EDEN-containing maternal mRNAs following fertilization. Binds to AU-rich sequences (AREs) of jun mRNA. Binds to the embryonic deadenylation element (EDEN) motif localized in the 3'-UTR of maternal mRNAs. Binds to RNA containing several repeats of the consensus sequence 5'-UGU-3'. EDEN-dependent deadenylation is enhanced by the presence of an additional cis element composed of three AUU repeats. The protein is CUGBP Elav-like family member 1 (celf1) of Xenopus tropicalis (Western clawed frog).